The following is a 411-amino-acid chain: UDP-N-acetylmuramoylalanine--D-glutamate ligase (411 aa).

Residue 92-98 (GTDGKST) coordinates ATP.

This sequence belongs to the MurCDEF family.

It localises to the cytoplasm. It carries out the reaction UDP-N-acetyl-alpha-D-muramoyl-L-alanine + D-glutamate + ATP = UDP-N-acetyl-alpha-D-muramoyl-L-alanyl-D-glutamate + ADP + phosphate + H(+). The protein operates within cell wall biogenesis; peptidoglycan biosynthesis. Its function is as follows. Cell wall formation. Catalyzes the addition of glutamate to the nucleotide precursor UDP-N-acetylmuramoyl-L-alanine (UMA). In Hydrogenobaculum sp. (strain Y04AAS1), this protein is UDP-N-acetylmuramoylalanine--D-glutamate ligase.